Here is a 456-residue protein sequence, read N- to C-terminus: Glycosyl hydrolase family 109 protein (456 aa).

Residues 1-31 (MKLNRRHFLKTAGLSAAGILTSQLPLSSAEA) constitute a signal peptide (tat-type signal). Residues 62–63 (QR), Asp84, 133–136 (WEWH), 153–154 (EV), and Asn182 each bind NAD(+). Substrate is bound by residues Tyr211, Arg230, 242–245 (YPTH), and Tyr324. An NAD(+)-binding site is contributed by Tyr242.

Belongs to the Gfo/Idh/MocA family. Glycosyl hydrolase 109 subfamily. It depends on NAD(+) as a cofactor. In terms of processing, predicted to be exported by the Tat system. The position of the signal peptide cleavage has not been experimentally proven.

In terms of biological role, glycosidase. In Shewanella pealeana (strain ATCC 700345 / ANG-SQ1), this protein is Glycosyl hydrolase family 109 protein.